Consider the following 102-residue polypeptide: Small ribosomal subunit protein uS10 (102 aa).

The protein belongs to the universal ribosomal protein uS10 family. As to quaternary structure, part of the 30S ribosomal subunit.

Involved in the binding of tRNA to the ribosomes. The protein is Small ribosomal subunit protein uS10 of Symbiobacterium thermophilum (strain DSM 24528 / JCM 14929 / IAM 14863 / T).